The primary structure comprises 201 residues: Calcium channel flower (201 aa).

3 helical membrane passes run 37–57, 59–79, and 103–120; these read LGIV…LSII, LSVS…VVMA, and PMYF…PPIF.

This sequence belongs to the calcium channel flower family. As to quaternary structure, homomultimer. Associates with the dally/ magu complex.

It localises to the cell membrane. The protein localises to the cytoplasmic vesicle. Its subcellular location is the secretory vesicle. It is found in the synaptic vesicle membrane. The protein resides in the presynaptic cell membrane. It localises to the endosome. Channel activity is inhibited by La(3+), which reduces Ca(2+) influx and thus inhibits it's function in promoting activity-dependent bulk endocytosis (ADBE) in response to high stimuli. Functionally, transmembrane protein which mediates synaptic endocytosis, fitness-based cell culling, neuronal culling, morphogen gradient scaling, and calcium transport. Regulates synaptic endocytosis and hence couples exo- with endocytosis. Controls two major modes of synaptic vesicle (SV) endocytosis in the synaptic boutons of neuromuscular junctions (NMJs); Ca(2+) channel-independent Clathrin-mediated endocytosis (CME) in response to mild stimulation, and Ca(2+) channel-dependent activity-dependent bulk endocytosis (ADBE) in response to strong stimulation. Functions in ADBE and subsequent SV reformation from bulk endosomes by initiating Ca(2+) channel-dependent phosphatidylinositol 4,5-bisphosphate (PtdIns(4,5)P2) compartmentalization in synaptic boutons. There it acts at the periactive zone to provide the low Ca(2+) levels required to initiate Calcineurin activation and upregulate PtdIns(4,5)P2. Conversely PtdIns(4,5)P2 enhances fwe Ca(2+) channel-activity, establishing a positive feedback loop that induces PtdIns(4,5)P2 microdomain at the periactive zone. These microdomains trigger bulk membrane invagination (i.e. ADBE) by triggering actin polymerization while also promoting localization of fwe to bulk endosomes, thereby removing the ADBE trigger to reduce endocytosis and prevent excess membrane uptake. PtdIns(4,5)P2 then promotes SV reformation from the bulk endosomes, to coordinate ADBE and subsequent SV reformation. Different combinations of the flower isoforms at the cell membrane are also required for the identification and elimination of suboptimal or supernumerary cells during development, regeneration, and adulthood. Required for the recognition and elimination of unfit cells in the developing wing during cell competition. In the developing pupal retina, mediates the elimination of unwanted postmitotic neurons, including supernumerary photoreceptor neurons that form at the periphery of the retina and are contained within incomplete ommatidia units. Also required for efficient elimination and replacement of old neurons by newly generated neurons during regeneration in the adult brain following mechanical injury. Downstream of the flower fitness fingerprints, cells identified as unwanted or unfit are eliminated via apoptosis through the expression of ahuizotl (azot). However, the cells marked for elimination by the flower isoforms only undergo apoptosis if additional thresholds are met; (1) their neighboring fit/healthy cells express different levels of the fwe isoforms, and (2) the levels of the protective signal SPARC expressed by the loser or unwanted cells are unable to inhibit caspase activation. These additional thresholds for flower-mediated apoptosis, allows useful cells to recover from transient and limited stress before they are unnecessarily eliminated. Functions with dally and magu in a mechanism of scaling, which utilises apoptosis to ensure that the dpp morphogen gradient, which mediates organ growth, remains proportional to the size of the growing wing. In this mechanism, fwe represses dally- and Magu-dependent activity in expanding the gradient, and dally/Magu inhibits fwe-dependent apoptosis to keep cell death rate low. When the levels of these different proteins are optimally regulated the gradient correctly scales with organ growth but when this fails, fwe-mediated apoptosis is activated to trim the developing tissue to match the correct size of the gradient. The chain is Calcium channel flower from Drosophila willistoni (Fruit fly).